The following is a 329-amino-acid chain: Beta-ketoacyl-[acyl-carrier-protein] synthase III (329 aa).

Residues C113 and H255 contribute to the active site. Positions 256–260 (QANQR) are ACP-binding. Residue N285 is part of the active site.

This sequence belongs to the thiolase-like superfamily. FabH family. Homodimer.

Its subcellular location is the cytoplasm. It catalyses the reaction malonyl-[ACP] + acetyl-CoA + H(+) = 3-oxobutanoyl-[ACP] + CO2 + CoA. Its pathway is lipid metabolism; fatty acid biosynthesis. Its function is as follows. Catalyzes the condensation reaction of fatty acid synthesis by the addition to an acyl acceptor of two carbons from malonyl-ACP. Catalyzes the first condensation reaction which initiates fatty acid synthesis and may therefore play a role in governing the total rate of fatty acid production. Possesses both acetoacetyl-ACP synthase and acetyl transacylase activities. Its substrate specificity determines the biosynthesis of branched-chain and/or straight-chain of fatty acids. This chain is Beta-ketoacyl-[acyl-carrier-protein] synthase III, found in Chlorobium luteolum (strain DSM 273 / BCRC 81028 / 2530) (Pelodictyon luteolum).